A 314-amino-acid chain; its full sequence is MTQITRDFRGQWMQQEPMSRHTTWKIGGPADLFAIPADEADLAGLIRRCREKGIPWMVVGNGSNLLVADKGIRGVVIHLGRAFSDRRLDDRRLTAGGGCALSGLARFAVRAGLQGLEFACGIPASLGGAVAMNAGAHGGAMENIVRWVDVIDDEGRIRRYRGEEMDFAYRHSRLQREKAIVVRVGMELRWGDREALERWMEEKLALRRKSQPLEFPNAGSVFLNPPGSLSAGQLIEEAGMKGFAIGGAQVSERHANFIVNRGGATAADVLALIDAVRARVLATCGIELQSEVRVIGDSGGQVDGGGTEDSHQRG.

The FAD-binding PCMH-type domain occupies 25–191; sequence KIGGPADLFA…VRVGMELRWG (167 aa). Residue Arg170 is part of the active site. Ser220 functions as the Proton donor in the catalytic mechanism. Glu291 is a catalytic residue.

This sequence belongs to the MurB family. It depends on FAD as a cofactor.

The protein localises to the cytoplasm. It carries out the reaction UDP-N-acetyl-alpha-D-muramate + NADP(+) = UDP-N-acetyl-3-O-(1-carboxyvinyl)-alpha-D-glucosamine + NADPH + H(+). Its pathway is cell wall biogenesis; peptidoglycan biosynthesis. In terms of biological role, cell wall formation. This is UDP-N-acetylenolpyruvoylglucosamine reductase from Heliobacterium modesticaldum (strain ATCC 51547 / Ice1).